A 124-amino-acid chain; its full sequence is Urease subunit beta (124 aa).

Belongs to the urease beta subunit family. As to quaternary structure, heterotrimer of UreA (gamma), UreB (beta) and UreC (alpha) subunits. Three heterotrimers associate to form the active enzyme.

It localises to the cytoplasm. It carries out the reaction urea + 2 H2O + H(+) = hydrogencarbonate + 2 NH4(+). It participates in nitrogen metabolism; urea degradation; CO(2) and NH(3) from urea (urease route): step 1/1. This chain is Urease subunit beta, found in Ureaplasma parvum serovar 3 (strain ATCC 27815 / 27 / NCTC 11736).